The chain runs to 216 residues: ATP phosphoribosyltransferase (216 aa).

This sequence belongs to the ATP phosphoribosyltransferase family. Short subfamily. In terms of assembly, heteromultimer composed of HisG and HisZ subunits.

The protein localises to the cytoplasm. The enzyme catalyses 1-(5-phospho-beta-D-ribosyl)-ATP + diphosphate = 5-phospho-alpha-D-ribose 1-diphosphate + ATP. The protein operates within amino-acid biosynthesis; L-histidine biosynthesis; L-histidine from 5-phospho-alpha-D-ribose 1-diphosphate: step 1/9. Catalyzes the condensation of ATP and 5-phosphoribose 1-diphosphate to form N'-(5'-phosphoribosyl)-ATP (PR-ATP). Has a crucial role in the pathway because the rate of histidine biosynthesis seems to be controlled primarily by regulation of HisG enzymatic activity. This is ATP phosphoribosyltransferase from Synechococcus sp. (strain CC9902).